The primary structure comprises 663 residues: Fructose-1,6-bisphosphatase class 3 1 (663 aa).

It belongs to the FBPase class 3 family. Mn(2+) serves as cofactor.

It catalyses the reaction beta-D-fructose 1,6-bisphosphate + H2O = beta-D-fructose 6-phosphate + phosphate. The protein operates within carbohydrate biosynthesis; gluconeogenesis. This Clostridium beijerinckii (strain ATCC 51743 / NCIMB 8052) (Clostridium acetobutylicum) protein is Fructose-1,6-bisphosphatase class 3 1.